Here is a 291-residue protein sequence, read N- to C-terminus: MAKISAAQVKELRDKTGVGMMDAKKALVAVEGDMEKAIDFLREKGMAKAAKKSDRVAAEGLANVAVNGNKAVIVEVNAETDFVAQNDQFKALVKHIADVIAENTPADVEAALQLKTDKGTLNDELIEATQVIGEKISLRRFEVVEKADADNFGAYLHDGGRIAVLSVVEGADEATAKDVAMHVAAINPKYVNRDEVPEAEVAHEKEVLTEEAKNEGKPEKIIEKMVAGRLNKFFAEVALDDQDFVKDPDLTVAKYVASKNGKVKSFVRYEVGEGIEKKEENFAEEVMSQIK.

The involved in Mg(2+) ion dislocation from EF-Tu stretch occupies residues 80-83 (TDFV).

This sequence belongs to the EF-Ts family.

Its subcellular location is the cytoplasm. In terms of biological role, associates with the EF-Tu.GDP complex and induces the exchange of GDP to GTP. It remains bound to the aminoacyl-tRNA.EF-Tu.GTP complex up to the GTP hydrolysis stage on the ribosome. The protein is Elongation factor Ts of Ligilactobacillus salivarius (strain UCC118) (Lactobacillus salivarius).